The sequence spans 394 residues: Monoterpene synthase FDS-5, chloroplastic (394 aa).

Residues 1-65 constitute a chloroplast transit peptide; the sequence is MASFISLSSK…NLNSQFMQVY (65 aa). Isopentenyl diphosphate-binding residues include Lys-100, Arg-103, and Gln-138. Positions 145 and 149 each coordinate Mg(2+). The short motif at 145–149 is the DDXXD motif element; that stretch reads DDMMD. A dimethylallyl diphosphate-binding site is contributed by Arg-154. Residue Arg-155 coordinates isopentenyl diphosphate. Positions 242, 281, 298, and 307 each coordinate dimethylallyl diphosphate.

Belongs to the FPP/GGPP synthase family. It depends on Mg(2+) as a cofactor. The cofactor is Mn(2+).

It is found in the plastid. Its subcellular location is the chloroplast. It catalyses the reaction isopentenyl diphosphate + dimethylallyl diphosphate = (2E)-geranyl diphosphate + diphosphate. The catalysed reaction is 2 dimethylallyl diphosphate = (R,R)-chrysanthemyl diphosphate + diphosphate. The enzyme catalyses 2 dimethylallyl diphosphate = (R)-lavandulyl diphosphate + diphosphate. Its function is as follows. Condenses two molecules of dimethylallyl diphosphate (DMAPP) to produce mainly an irregular monoterpene, chrysanthemyl diphosphate (CPP) and lower amounts of a branched monoterpene, lavandulyl diphosphate (LPP). CPP is a precursor of the pyrethrin insecticides. When incubated with isopentenyl diphosphate (IPP) and DMAPP, catalyzes three competing isoprenoid condensation reactions, a chain elongation to give geranyl diphosphate (GPP), a cyclopropanation to give CPP and a branching to give LPP. The sequence is that of Monoterpene synthase FDS-5, chloroplastic (FDS-5) from Artemisia spiciformis (Spiked big sagebrush).